We begin with the raw amino-acid sequence, 335 residues long: Probable cytosolic iron-sulfur protein assembly protein Ciao1 (335 aa).

WD repeat units lie at residues 12–51, 57–96, 101–140, 146–185, 192–231, 250–289, and 301–335; these read GHKGRIWGVAWHPKGNVFASCGEDKAIRIWSLTGNTWSTK, GHKRTIREIQWSPCGQYLASASFDATTAIWSKSSGEFECN, GHENEVKSVSWSRSGGLLATCSRDKSVWIWEVAGDDEFEC, SHTQDVKRVVWHPTKEILASASYDNTIKMYAEEPIDNDWD, SHTSTIWGIDFDADGERLVSCSDDTTVKIWRAYHPGNSAG, QHSRAIYDVSWCKLTGLIATACGDDGIRIFKETSDSKPDE, and AHDQDVNSVQWNPVVAGQLISCSDDGTIKIWKVTE.

It belongs to the WD repeat CIA1 family.

Essential component of the cytosolic iron-sulfur (Fe/S) protein assembly machinery. Required for the maturation of extramitochondrial Fe/S proteins. The sequence is that of Probable cytosolic iron-sulfur protein assembly protein Ciao1 from Drosophila yakuba (Fruit fly).